The primary structure comprises 90 residues: Probable Fe(2+)-trafficking protein (90 aa).

This sequence belongs to the Fe(2+)-trafficking protein family. Monomer.

Could be a mediator in iron transactions between iron acquisition and iron-requiring processes, such as synthesis and/or repair of Fe-S clusters in biosynthetic enzymes. This is Probable Fe(2+)-trafficking protein from Proteus mirabilis (strain HI4320).